Consider the following 505-residue polypeptide: MEGGPAVCCQDPRAELVERVAAIDVTHLEEADGGPEPTRNGVDPPPRARAASVIPGSTSRLLPARPSLSARKLSLQERPAGSYLEAQAGPYATGPASHISPRAWRRPTIESHHVAISDAEDCVQLNQYKLQSEIGKGAYGVVRLAYNESEDRHYAMKVLSKKKLLKQYGFPRRPPPRGSQAAQGGPAKQLLPLERVYQEIAILKKLDHVNVVKLIEVLDDPAEDNLYLVFDLLRKGPVMEVPCDKPFSEEQARLYLRDVILGLEYLHCQKIVHRDIKPSNLLLGDDGHVKIADFGVSNQFEGNDAQLSSTAGTPAFMAPEAISDSGQSFSGKALDVWATGVTLYCFVYGKCPFIDDFILALHRKIKNEPVVFPEEPEISEELKDLILKMLDKNPETRIGVPDIKLHPWVTKNGEEPLPSEEEHCSVVEVTEEEVKNSVRLIPSWTTVILVKSMLRKRSFGNPFEPQARREERSMSAPGNLLVKEGFGEGGKSPELPGVQEDEAAS.

Residues 26-61 (THLEEADGGPEPTRNGVDPPPRARAASVIPGSTSRL) are disordered. Serine 67 and serine 74 each carry phosphoserine. Residue arginine 78 is modified to Asymmetric dimethylarginine. The residue at position 100 (serine 100) is a Phosphoserine. Threonine 108 bears the Phosphothreonine mark. In terms of domain architecture, Protein kinase spans 128-409 (YKLQSEIGKG…VPDIKLHPWV (282 aa)). ATP contacts are provided by residues 134–142 (IGKGAYGVV) and lysine 157. The interval 167–189 (QYGFPRRPPPRGSQAAQGGPAKQ) is RP domain. Aspartate 275 (proton acceptor) is an active-site residue. The segment at 435 to 440 (KNSVRL) is autoinhibitory domain. Residues 438–463 (VRLIPSWTTVILVKSMLRKRSFGNPF) form a calmodulin-binding region. Residues serine 458, serine 475, and serine 492 each carry the phosphoserine modification. Positions 460 to 505 (GNPFEPQARREERSMSAPGNLLVKEGFGEGGKSPELPGVQEDEAAS) are disordered.

The protein belongs to the protein kinase superfamily. Ser/Thr protein kinase family. As to quaternary structure, interacts with CAMK4 and calmodulin. In terms of processing, appears to be autophosphorylated in a Ca(2+)/calmodulin-dependent manner. Phosphorylated at multiple sites by PRCAKA/PKA. Phosphorylation of Ser-458 is blocked upon binding to Ca(2+)/calmodulin. In vitro, phosphorylated by CAMK1 and CAMK4.

It is found in the cytoplasm. The protein resides in the nucleus. It carries out the reaction L-seryl-[protein] + ATP = O-phospho-L-seryl-[protein] + ADP + H(+). The enzyme catalyses L-threonyl-[protein] + ATP = O-phospho-L-threonyl-[protein] + ADP + H(+). With respect to regulation, activated by Ca(2+)/calmodulin. Binding of calmodulin may relieve intrasteric autoinhibition. Partially inhibited upon phosphorylation by PRCAKA/PKA. May be regulated through phosphorylation by CAMK1 and CAMK4. Its function is as follows. Calcium/calmodulin-dependent protein kinase that belongs to a proposed calcium-triggered signaling cascade involved in a number of cellular processes. Phosphorylates CAMK1, CAMK1D, CAMK1G and CAMK4. Involved in regulating cell apoptosis. Promotes cell survival by phosphorylating AKT1/PKB that inhibits pro-apoptotic BAD/Bcl2-antagonist of cell death. This Homo sapiens (Human) protein is Calcium/calmodulin-dependent protein kinase kinase 1 (CAMKK1).